Here is a 350-residue protein sequence, read N- to C-terminus: UDP-3-O-acylglucosamine N-acyltransferase (350 aa).

The active-site Proton acceptor is the H251.

Belongs to the transferase hexapeptide repeat family. LpxD subfamily. Homotrimer.

The catalysed reaction is a UDP-3-O-[(3R)-3-hydroxyacyl]-alpha-D-glucosamine + a (3R)-hydroxyacyl-[ACP] = a UDP-2-N,3-O-bis[(3R)-3-hydroxyacyl]-alpha-D-glucosamine + holo-[ACP] + H(+). It participates in bacterial outer membrane biogenesis; LPS lipid A biosynthesis. Its function is as follows. Catalyzes the N-acylation of UDP-3-O-acylglucosamine using 3-hydroxyacyl-ACP as the acyl donor. Is involved in the biosynthesis of lipid A, a phosphorylated glycolipid that anchors the lipopolysaccharide to the outer membrane of the cell. This is UDP-3-O-acylglucosamine N-acyltransferase from Prochlorococcus marinus (strain NATL2A).